The sequence spans 212 residues: Large ribosomal subunit protein uL3 (212 aa).

A disordered region spans residues 127 to 161 (NFKRGPMAHGSKNHRLPGSTGAGTTPGRVFPGKRM).

This sequence belongs to the universal ribosomal protein uL3 family. Part of the 50S ribosomal subunit. Forms a cluster with proteins L14 and L19.

Functionally, one of the primary rRNA binding proteins, it binds directly near the 3'-end of the 23S rRNA, where it nucleates assembly of the 50S subunit. The polypeptide is Large ribosomal subunit protein uL3 (Thermosynechococcus vestitus (strain NIES-2133 / IAM M-273 / BP-1)).